Reading from the N-terminus, the 145-residue chain is MKLNDLSPAPGSRREKHRPGRGIGSGLGKTGGRGHKGQTSRSGGTIAPGFEGGQQPLHRRLPKFGFVSLKAMDRAEVRLSELAKVEGDIVTVQSLKDANVINVNVQRVKIMLSGEVARAVTIGKGIGATKGARAAIEAAGGKFEE.

A disordered region spans residues 1 to 57 (MKLNDLSPAPGSRREKHRPGRGIGSGLGKTGGRGHKGQTSRSGGTIAPGFEGGQQPL). Over residues 21 to 31 (RGIGSGLGKTG) the composition is skewed to gly residues.

The protein belongs to the universal ribosomal protein uL15 family. As to quaternary structure, part of the 50S ribosomal subunit.

Its function is as follows. Binds to the 23S rRNA. This Pseudomonas fluorescens (strain Pf0-1) protein is Large ribosomal subunit protein uL15.